Reading from the N-terminus, the 588-residue chain is Tripartite motif-containing protein 29 (588 aa).

The tract at residues 1–66 (MEAADASRSN…GSALKPGEGR (66 aa)) is disordered. A phosphoserine mark is found at Ser21, Ser28, Ser58, and Ser104. Tyr106 is subject to Phosphotyrosine. Residues 220 to 260 (FEARKCPVHGKTMELFCQTDQTCICYLCMFQEHKNHSTVTV) form a B box-type zinc finger. Zn(2+) is bound by residues Cys225, His228, Cys247, and His252. A coiled-coil region spans residues 259–352 (TVEEAKAEKE…VKVIMDALDE (94 aa)). The residue at position 476 (Thr476) is a Phosphothreonine. Ser489 carries the post-translational modification Phosphoserine.

Interacts with VIM and HINT1. Interacts with IKBKG/NEMO. Interacts with STING1. Post-translationally, constitutively phosphorylated by PKC on serine/threonine in A431 cells. Expressed in placenta, prostate and thymus.

Its subcellular location is the cytoplasm. It is found in the lysosome. In terms of biological role, plays a crucial role in the regulation of macrophage activation in response to viral or bacterial infections within the respiratory tract. Mechanistically, TRIM29 interacts with IKBKG/NEMO in the lysosome where it induces its 'Lys-48' ubiquitination and subsequent degradation. In turn, the expression of type I interferons and the production of pro-inflammatory cytokines are inhibited. Additionally, induces the 'Lys-48' ubiquitination of STING1 in a similar way, leading to its degradation. In Homo sapiens (Human), this protein is Tripartite motif-containing protein 29 (TRIM29).